The primary structure comprises 767 residues: RNA cytosine C(5)-methyltransferase NSUN2 (767 aa).

The interval 1–36 is disordered; that stretch reads MGRRSRGRRLQQQQRPEDAEDGAEGGGKRGEAGWEG. K46 is covalently cross-linked (Glycyl lysine isopeptide (Lys-Gly) (interchain with G-Cter in SUMO2)). The residue at position 139 (S139) is a Phosphoserine; by AURKB. Residues 184–190, D215, D242, and D268 each bind S-adenosyl-L-methionine; that span reads CAAPGSK. C321 (nucleophile) is an active-site residue. Residues 436–481 are disordered; sequence NKRQPKLQGKSAETRESTQLSPADLTEGKPTDPSKLESPSFTGTGD. S456 bears the Phosphoserine mark. Over residues 461 to 470 the composition is skewed to basic and acidic residues; the sequence is TEGKPTDPSK. Residues K464 and K470 each participate in a glycyl lysine isopeptide (Lys-Gly) (interchain with G-Cter in SUMO2) cross-link. Phosphoserine is present on S473. Glycyl lysine isopeptide (Lys-Gly) (interchain with G-Cter in SUMO2) cross-links involve residues K511 and K516. Position 586 is an N6-acetyllysine; alternate (K586). At K586 the chain carries N6-malonyllysine; alternate. K586 participates in a covalent cross-link: Glycyl lysine isopeptide (Lys-Gly) (interchain with G-Cter in SUMO2); alternate. Residue S593 is modified to Phosphoserine. Residues K640, K654, and K660 each participate in a glycyl lysine isopeptide (Lys-Gly) (interchain with G-Cter in SUMO2) cross-link. Phosphothreonine is present on T718. Polar residues predominate over residues 719-730; it reads NESAASTGQPDN. Residues 719–767 are disordered; that stretch reads NESAASTGQPDNDVTEGQRAGEPNSPDAEEANSPDVTAGCDPAGVHPPR. S724, S743, and S751 each carry phosphoserine.

This sequence belongs to the class I-like SAM-binding methyltransferase superfamily. RsmB/NOP family. TRM4 subfamily. In terms of assembly, interacts with NPM1 and NCL during interphase; interaction is disrupted following phosphorylation at Ser-139. Phosphorylated at Ser-139 by AURKB during mitosis, leading to abolish methyltransferase activity and the interaction with NPM1. In terms of tissue distribution, expressed in adult and fetal brain and in lymphoblastoid cells.

The protein resides in the nucleus. Its subcellular location is the nucleolus. It localises to the cytoplasm. The protein localises to the mitochondrion. It is found in the cytoskeleton. The protein resides in the spindle. Its subcellular location is the secreted. It localises to the extracellular exosome. It carries out the reaction cytidine(48) in tRNA + S-adenosyl-L-methionine = 5-methylcytidine(48) in tRNA + S-adenosyl-L-homocysteine + H(+). The enzyme catalyses cytidine(49) in tRNA + S-adenosyl-L-methionine = 5-methylcytidine(49) in tRNA + S-adenosyl-L-homocysteine + H(+). The catalysed reaction is cytidine(50) in tRNA + S-adenosyl-L-methionine = 5-methylcytidine(50) in tRNA + S-adenosyl-L-homocysteine + H(+). It catalyses the reaction cytidine(34) in tRNA precursor + S-adenosyl-L-methionine = 5-methylcytidine(34) in tRNA precursor + S-adenosyl-L-homocysteine + H(+). It carries out the reaction a cytidine in mRNA + S-adenosyl-L-methionine = a 5-methylcytidine in mRNA + S-adenosyl-L-homocysteine + H(+). Inhibited by magnesium ions. RNA cytosine C(5)-methyltransferase that methylates cytosine to 5-methylcytosine (m5C) in various RNAs, such as tRNAs, mRNAs and some long non-coding RNAs (lncRNAs). Involved in various processes, such as epidermal stem cell differentiation, testis differentiation and maternal to zygotic transition during early development: acts by increasing protein synthesis; cytosine C(5)-methylation promoting tRNA stability and preventing mRNA decay. Methylates cytosine to 5-methylcytosine (m5C) at positions 34 and 48 of intron-containing tRNA(Leu)(CAA) precursors, and at positions 48, 49 and 50 of tRNA(Gly)(GCC) precursors. tRNA methylation is required generation of RNA fragments derived from tRNAs (tRFs). Also mediates C(5)-methylation of mitochondrial tRNAs. Catalyzes cytosine C(5)-methylation of mRNAs, leading to stabilize them and prevent mRNA decay: mRNA stabilization involves YBX1 that specifically recognizes and binds m5C-modified transcripts. Cytosine C(5)-methylation of mRNAs also regulates mRNA export: methylated transcripts are specifically recognized by THOC4/ALYREF, which mediates mRNA nucleo-cytoplasmic shuttling. Also mediates cytosine C(5)-methylation of non-coding RNAs, such as vault RNAs (vtRNAs), promoting their processing into regulatory small RNAs. Cytosine C(5)-methylation of vtRNA VTRNA1.1 promotes its processing into small-vault RNA4 (svRNA4) and regulates epidermal differentiation. May act downstream of Myc to regulate epidermal cell growth and proliferation. Required for proper spindle assembly and chromosome segregation, independently of its methyltransferase activity. The sequence is that of RNA cytosine C(5)-methyltransferase NSUN2 from Homo sapiens (Human).